The chain runs to 337 residues: Glucokinase (337 aa).

A11–T16 contributes to the ATP binding site.

This sequence belongs to the bacterial glucokinase family.

It is found in the cytoplasm. It catalyses the reaction D-glucose + ATP = D-glucose 6-phosphate + ADP + H(+). The sequence is that of Glucokinase from Xylella fastidiosa (strain M12).